The sequence spans 496 residues: Myotilin (496 aa).

The segment at 1–37 (MFNYERPKHFIQPQNPCGSRLQPPGPEVSGFPSQTKQ) is disordered. Arginine 20 carries the omega-N-methylarginine modification. The tract at residues 78–149 (PNPGQKVTAT…PTPKTPDHEI (72 aa)) is necessary for interaction with ACTN1. 2 stretches are compositionally biased toward polar residues: residues 202 to 213 (NSDVQDSPQHNP) and 221 to 233 (PTSQ…SSRA). The interval 202-239 (NSDVQDSPQHNPEQARLHVPTSQVRSRSSSRAEANDQD) is disordered. The necessary for interaction with FLNC stretch occupies residues 213–491 (PEQARLHVPT…QRLAAQSGLY (279 aa)). The interval 213 to 496 (PEQARLHVPT…QSGLYESEEL (284 aa)) is necessary for interaction with ACTA1. 2 consecutive Ig-like C2-type domains span residues 248 to 333 (PRFI…ATFT) and 347 to 439 (PMFI…LDVT).

Belongs to the myotilin/palladin family. As to quaternary structure, homodimer. Interacts with ACTA1, ACTN1, FLNA, FLNB, FLNC, and MYOZ2. Interacts with the C-terminal region of MYOZ1. As to expression, expressed in skeletal muscle (at protein level).

The protein localises to the cell membrane. It is found in the sarcolemma. It localises to the cytoplasm. The protein resides in the cytoskeleton. Its subcellular location is the myofibril. The protein localises to the sarcomere. It is found in the z line. Its function is as follows. Component of a complex of multiple actin cross-linking proteins. Involved in the control of myofibril assembly and stability at the Z lines in muscle cells. This is Myotilin (Myot) from Mus musculus (Mouse).